Reading from the N-terminus, the 514-residue chain is 2,3-bisphosphoglycerate-independent phosphoglycerate mutase (514 aa).

Residues Asp-14 and Ser-64 each coordinate Mn(2+). Ser-64 serves as the catalytic Phosphoserine intermediate. Substrate-binding positions include His-125, 155–156 (RD), Arg-187, Arg-193, 263–266 (RADR), and Lys-336. Residues Asp-403, His-407, Asp-444, His-445, and His-463 each contribute to the Mn(2+) site.

This sequence belongs to the BPG-independent phosphoglycerate mutase family. In terms of assembly, monomer. Mn(2+) is required as a cofactor.

It catalyses the reaction (2R)-2-phosphoglycerate = (2R)-3-phosphoglycerate. The protein operates within carbohydrate degradation; glycolysis; pyruvate from D-glyceraldehyde 3-phosphate: step 3/5. Its function is as follows. Catalyzes the interconversion of 2-phosphoglycerate and 3-phosphoglycerate. This Shewanella halifaxensis (strain HAW-EB4) protein is 2,3-bisphosphoglycerate-independent phosphoglycerate mutase.